Here is a 724-residue protein sequence, read N- to C-terminus: Coiled-coil domain-containing protein 175 (724 aa).

Coiled coils occupy residues 131 to 164, 203 to 256, 282 to 373, 426 to 534, and 565 to 627; these read VEMS…NTAL, INLE…RKET, VVLS…RQYK, ELHR…ERKL, and QLQV…QLRE.

The chain is Coiled-coil domain-containing protein 175 (CCDC175) from Bos taurus (Bovine).